The sequence spans 410 residues: Indoleamine 2,3-dioxygenase nanC (410 aa).

H309 provides a ligand contact to heme.

Belongs to the indoleamine 2,3-dioxygenase family. Requires heme as cofactor.

It carries out the reaction D-tryptophan + O2 = N-formyl-D-kynurenine. It catalyses the reaction L-tryptophan + O2 = N-formyl-L-kynurenine. Its pathway is secondary metabolite biosynthesis. In terms of biological role, indoleamine 2,3-dioxygenase; part of the gene cluster that mediates the biosynthesis of the benzazepine alkaloid nanangelenin A which contains an unprecedented 3,4-dihydro-1-benzazepine-2,5-dione-N-prenyl-N-acetoxy-anthranilamide scaffold. The first step of nanangelenin biosynthesis is catalyzed by the indoleamine 2,3-dioxygenase nanC which produces N-formyl-kynurenine through the catabolism of tryptophan. The two-module NRPS nanA then utilizes anthranilate (Ant) and L-kynurenine (L-Kyn) to assemble the dipeptide product nanangelenin B. The first adenylation domain of nanA (A1) loads anthranilate onto the T1 domain, while A2 loads kynurenine, generated through spontaneous nonenzymatic deformylation of the nanC-supplied N-formyl-kynurenine. The peptide bond formation between the tethered amino acids is catalyzed by the first condensation domain (C1) between anthranilate's carbonyl carbon and kynurenine's aliphatic primary amine. The second C domain (C2) catalyzes the final cyclization event between the aromatic amine of kynurenine and the tethered carbonyl carbon, yielding nanangelenin B. The terminal T3 domain enhances the catalytic efficiency of C2, suggesting the T2-tethered Ant-L-Kyn is transferred to T3 prior to cyclization by C2. Once released from nanA, nanangelenin B is then prenylated by the prenyltransferase nanD to form nanangelenin C. Nanangelenin C is then N-hydroxylated by the FAD-dependent monooxygenase nanF and further acetylated by the acetyltransferase nanB to yield nanangelenin F. Finally, the N-methyltransferase nanE methylates the amide nitrogen of 1-benzazepine to convert nanangelenin F into nanangelenin A. NanE is also able to methylate most of the intermediates of the pathway such as nanangelenin B and nanangelenin C to produce nanangelenin D and nanangelenin E, respectively. The sequence is that of Indoleamine 2,3-dioxygenase nanC from Aspergillus nanangensis.